The following is a 216-amino-acid chain: ATP-dependent Clp protease proteolytic subunit 3 (216 aa).

The active-site Nucleophile is the Ser120. Residue His145 is part of the active site.

This sequence belongs to the peptidase S14 family. Fourteen ClpP subunits assemble into 2 heptameric rings which stack back to back to give a disk-like structure with a central cavity, resembling the structure of eukaryotic proteasomes.

The protein resides in the cytoplasm. The enzyme catalyses Hydrolysis of proteins to small peptides in the presence of ATP and magnesium. alpha-casein is the usual test substrate. In the absence of ATP, only oligopeptides shorter than five residues are hydrolyzed (such as succinyl-Leu-Tyr-|-NHMec, and Leu-Tyr-Leu-|-Tyr-Trp, in which cleavage of the -Tyr-|-Leu- and -Tyr-|-Trp bonds also occurs).. Cleaves peptides in various proteins in a process that requires ATP hydrolysis. Has a chymotrypsin-like activity. Plays a major role in the degradation of misfolded proteins. This is ATP-dependent Clp protease proteolytic subunit 3 from Prochlorococcus marinus (strain SARG / CCMP1375 / SS120).